A 260-amino-acid chain; its full sequence is MELDEVIITRAIFDEYSKTFLDYTDIDVALVGGGPANLVAAKYLAEAGVKVALYEQKLSLGGGMWAGGMMFPRIVVQEEATRILDDFGIRYKEYESGYYVANSVESVGKLIAGATSAGAEVFNLVSFEDIMIRENDRVTGIVINWGPVTTQRLHVDPLMIRTKLVIDGTGHEAVVCNTILRKIPNAKIGELGLLGEKPMWSEVGERLAVNATQEIYPGLIVAGMAANAATRAPRMGPVFGGMLLSGEKAAKLALDRLKTI.

NAD(+) contacts are provided by residues Ala-36, 55 to 56, Gly-63, and 154 to 156; these read EQ and HVD. Residues Asp-156 and His-171 each contribute to the Fe cation site. Met-224 is a binding site for NAD(+). Arg-234 lines the glycine pocket.

Belongs to the THI4 family. As to quaternary structure, homooctamer; tetramer of dimers. Requires Fe(2+) as cofactor.

It carries out the reaction hydrogen sulfide + glycine + NAD(+) = ADP-5-ethyl-4-methylthiazole-2-carboxylate + nicotinamide + 3 H2O + H(+). It functions in the pathway cofactor biosynthesis; thiamine diphosphate biosynthesis. Its function is as follows. Involved in the biosynthesis of the thiazole moiety of thiamine. Catalyzes the conversion of NAD and glycine to adenosine diphosphate 5-(2-hydroxyethyl)-4-methylthiazole-2-carboxylate (ADT), an adenylated thiazole intermediate, using free sulfide as a source of sulfur. This is Thiamine thiazole synthase from Methanosarcina acetivorans (strain ATCC 35395 / DSM 2834 / JCM 12185 / C2A).